The following is a 552-amino-acid chain: Glutamine-dependent NAD(+) synthetase (552 aa).

One can recognise a CN hydrolase domain in the interval 11 to 253 (LRIAMAQFDF…DQWLVVDYAA (243 aa)). E52 serves as the catalytic Proton acceptor; for glutaminase activity. K119 (for glutaminase activity) is an active-site residue. Y125 lines the L-glutamine pocket. Residue C157 is the Nucleophile; for glutaminase activity of the active site. The L-glutamine site is built by S183 and K189. The interval 275–552 (AWRAVVRGLK…YPITNGYSGQ (278 aa)) is ligase. 298 to 305 (GLSGGIDS) provides a ligand contact to ATP. Deamido-NAD(+) is bound at residue N381. Residue T405 participates in ATP binding. Deamido-NAD(+) is bound by residues E410 and K522.

The protein in the C-terminal section; belongs to the NAD synthetase family.

It carries out the reaction deamido-NAD(+) + L-glutamine + ATP + H2O = L-glutamate + AMP + diphosphate + NAD(+) + H(+). It functions in the pathway cofactor biosynthesis; NAD(+) biosynthesis; NAD(+) from deamido-NAD(+) (L-Gln route): step 1/1. Its function is as follows. Catalyzes the ATP-dependent amidation of deamido-NAD to form NAD. Uses L-glutamine as a nitrogen source. The chain is Glutamine-dependent NAD(+) synthetase from Xanthomonas campestris pv. campestris (strain 8004).